We begin with the raw amino-acid sequence, 193 residues long: Dense granule protein 2 (193 aa).

Asn4 is a glycosylation site (N-linked (GlcNAc...) asparagine). Residues 14-34 (FSPLTVVMLAVTLVAFMGVPL) traverse the membrane as a helical segment. Residue Asn74 is glycosylated (N-linked (GlcNAc...) asparagine). The disordered stretch occupies residues 75–140 (SSELAGSRDK…APKPVPVRSA (66 aa)). Residues 88 to 98 (EAEEEAAEVET) show a composition bias toward acidic residues. The chain crosses the membrane as a helical span at residues 153–173 (HRVIGTAVIAAVVAALLWKFS). Residues 174 to 193 (RRRSGAPREGGENENGGEEK) are disordered.

It belongs to the Gra6 family.

Its subcellular location is the membrane. In Neospora caninum (Coccidian parasite), this protein is Dense granule protein 2 (DG2).